Here is a 220-residue protein sequence, read N- to C-terminus: MTALTILMIILAYLGGSLSSAVLVSRITGLPDPRDHGSHNPGATNVLRLGGRVAALVVLLLDVLKGTAPVYLAWYLQIKPVYLGFIGVAACLGHMYPIFFHFRGGKGVATALGTMMPIGFTMGGAVIGTWLVVLLVSGYSSLASIITVLLSPLFTYLIKPEYTLPVSLLSCLILIRHHENIARLLKGEEPRVWGRQAQRRQEEVGEMDDVAQKRDERDKK.

The next 5 membrane-spanning stretches (helical) occupy residues 4–24 (LTIL…AVLV), 53–73 (VAAL…VYLA), 80–100 (PVYL…PIFF), 116–136 (MPIG…VLLV), and 138–158 (GYSS…TYLI). Residues 193–220 (WGRQAQRRQEEVGEMDDVAQKRDERDKK) form a disordered region. The segment covering 210 to 220 (VAQKRDERDKK) has biased composition (basic and acidic residues).

The protein belongs to the PlsY family. As to quaternary structure, probably interacts with PlsX.

It is found in the cell inner membrane. The enzyme catalyses an acyl phosphate + sn-glycerol 3-phosphate = a 1-acyl-sn-glycero-3-phosphate + phosphate. The protein operates within lipid metabolism; phospholipid metabolism. In terms of biological role, catalyzes the transfer of an acyl group from acyl-phosphate (acyl-PO(4)) to glycerol-3-phosphate (G3P) to form lysophosphatidic acid (LPA). This enzyme utilizes acyl-phosphate as fatty acyl donor, but not acyl-CoA or acyl-ACP. This is Glycerol-3-phosphate acyltransferase from Aeromonas salmonicida (strain A449).